Consider the following 210-residue polypeptide: Thymidylate kinase (210 aa).

ATP is bound at residue 10-17; sequence GPEGAGKS.

This sequence belongs to the thymidylate kinase family.

It carries out the reaction dTMP + ATP = dTDP + ADP. In terms of biological role, phosphorylation of dTMP to form dTDP in both de novo and salvage pathways of dTTP synthesis. In Pseudomonas syringae pv. tomato (strain ATCC BAA-871 / DC3000), this protein is Thymidylate kinase.